A 231-amino-acid polypeptide reads, in one-letter code: Small ribosomal subunit protein uS3 (231 aa).

Residues 39–107 form the KH type-2 domain; sequence IRELLHKELK…DVVINIVEIR (69 aa).

This sequence belongs to the universal ribosomal protein uS3 family. Part of the 30S ribosomal subunit. Forms a tight complex with proteins S10 and S14.

Functionally, binds the lower part of the 30S subunit head. Binds mRNA in the 70S ribosome, positioning it for translation. The polypeptide is Small ribosomal subunit protein uS3 (Nitrobacter hamburgensis (strain DSM 10229 / NCIMB 13809 / X14)).